A 249-amino-acid polypeptide reads, in one-letter code: MKHNASSALLSAFQGLRISSSATPFRAASLATSAVRRPIAPTPVSVASHVRLFSATAIQAGSWLEPNLNRKKKMMKGRPRVPTGGSTKGTTVVWGDYGLRMRDHHRRISAQQLKLAEDTIKQRLRGQKYRLYKRVACNVGVYVSGNEMRMGKGKGSFDHWATRVAVNQIIFEIRGQLHEQVIRDAFRLAGHKLPGLYEFVKKGDPPVVGITKLEDGLTVEDLKNPRKKLLMPEITQSAASTSSTAAPPS.

It belongs to the universal ribosomal protein uL16 family. Component of the mitochondrial large ribosomal subunit (mt-LSU). Mature N.crassa 74S mitochondrial ribosomes consist of a small (37S) and a large (54S) subunit. The 37S small subunit contains a 16S ribosomal RNA (16S mt-rRNA) and 32 different proteins. The 54S large subunit contains a 23S rRNA (23S mt-rRNA) and 42 different proteins.

Its subcellular location is the mitochondrion. Component of the mitochondrial ribosome (mitoribosome), a dedicated translation machinery responsible for the synthesis of mitochondrial genome-encoded proteins, including at least some of the essential transmembrane subunits of the mitochondrial respiratory chain. The mitoribosomes are attached to the mitochondrial inner membrane and translation products are cotranslationally integrated into the membrane. The protein is Large ribosomal subunit protein uL16m (mrpl16) of Neurospora crassa (strain ATCC 24698 / 74-OR23-1A / CBS 708.71 / DSM 1257 / FGSC 987).